Here is a 159-residue protein sequence, read N- to C-terminus: Ribosomal RNA large subunit methyltransferase H (159 aa).

Residues L76, G107, and 126–131 (LSKLTM) each bind S-adenosyl-L-methionine.

This sequence belongs to the RNA methyltransferase RlmH family. In terms of assembly, homodimer.

The protein localises to the cytoplasm. It catalyses the reaction pseudouridine(1915) in 23S rRNA + S-adenosyl-L-methionine = N(3)-methylpseudouridine(1915) in 23S rRNA + S-adenosyl-L-homocysteine + H(+). Its function is as follows. Specifically methylates the pseudouridine at position 1915 (m3Psi1915) in 23S rRNA. The polypeptide is Ribosomal RNA large subunit methyltransferase H (Acinetobacter baylyi (strain ATCC 33305 / BD413 / ADP1)).